A 308-amino-acid chain; its full sequence is Ankyrin repeat and SOCS box protein 12 (308 aa).

5 ANK repeats span residues 63 to 92 (IPGT…DVDS), 96 to 125 (KAQT…CPSG), 129 to 158 (NNCS…EANV), 171 to 200 (SCSG…DPDY), and 213 to 243 (QPRT…NIYL). One can recognise an SOCS box domain in the interval 268–308 (PRSLLSQTRLVIRRSLCRANQSQATDQLDIPPVLISYLKHQ).

Belongs to the ankyrin SOCS box (ASB) family. As to quaternary structure, interacts with CUL5 and RNF7.

Its pathway is protein modification; protein ubiquitination. Probable substrate-recognition component of a SCF-like ECS (Elongin-Cullin-SOCS-box protein) E3 ubiquitin-protein ligase complex which mediates the ubiquitination and subsequent proteasomal degradation of target proteins. The protein is Ankyrin repeat and SOCS box protein 12 (Asb12) of Mus musculus (Mouse).